The sequence spans 565 residues: MKPTNNSTLEVISPKVQVDDEFITTDYDYQTSHVKRTADGQLQVHPQTTSLKIRTGRHVPKLGVMLVGWGGNNGSTLTAALEANRRQLKWRKRTGVQEANWYGSITQASTVFIGSDEDGGDVYVPMKELLPMVEPDNIIVDGWDISGLHLGDAMRRAEVLDVALQDQIYDQLAQLRPRPSIYDPDFIAANQSDRADNVIRGTRLEQYEQIRKDIRDFRERSGVDSVIVLWTANTERFADVQPGLNTTSQELIASLEANHSEVSPSTIFAMASIAEGCTYINGSPQNTFVPGLIQLAEEKNVFIAGDDFKSGQTKIKSVLVDFLVGAGIKPVSIASYNHLGNNDGKNLSAPQQFRSKEISKSNVVDDMVASNRLLYGPDEHPDHVVVIKYVPYVGDSKRAMDEYTSEIMMGGHNTLVIHNTCEDSLLATPLILDLVILGELSTRIQLRNAEKESAPWVPFKPVLSLLSYLCKAPLVPQGSQVVNSLFRQRAAIENILRGCIGLPPISHMTLEQRFDFSTITNEPPLKRVKILGQPCSVESVTNGKKLHANGHSNGSAKLATNGNGH.

Residues Gly70, Gly71, Asn72, Asn73, Asp144, Ser180, Ile181, Gln191, Arg194, Thr231, Ala232, Asn233, Thr234, Gly282, Ser283, Asp307, Ser310, Asn341, Asn342, Asp343, Lys356, Gly394, Asp395, Asp423, and Ser424 each contribute to the NAD(+) site. At Ser536 the chain carries Phosphoserine. The disordered stretch occupies residues 546–565; sequence LHANGHSNGSAKLATNGNGH. Residues 550-565 show a composition bias toward polar residues; sequence GHSNGSAKLATNGNGH.

This sequence belongs to the myo-inositol 1-phosphate synthase family. Requires NAD(+) as cofactor. In terms of tissue distribution, higher expression in adult heads than bodies.

The protein resides in the cytoplasm. The catalysed reaction is D-glucose 6-phosphate = 1D-myo-inositol 3-phosphate. Its pathway is polyol metabolism; myo-inositol biosynthesis; myo-inositol from D-glucose 6-phosphate: step 1/2. In terms of biological role, key enzyme in myo-inositol biosynthesis pathway that catalyzes the conversion of glucose 6-phosphate to 1-myo-inositol 1-phosphate in a NAD-dependent manner. Rate-limiting enzyme in the synthesis of all inositol-containing compounds. The polypeptide is Inositol-3-phosphate synthase (Inos) (Drosophila melanogaster (Fruit fly)).